Reading from the N-terminus, the 260-residue chain is Small ribosomal subunit protein uS3 (260 aa).

Residues 39–114 (LRQYIEQKLG…QIRINVVEVQ (76 aa)) enclose the KH type-2 domain. The segment at 218–260 (QEVATPPPSPRDRDRDRGDRDREPRRRQQQRRRQQFEDRSNEG) is disordered. Composition is skewed to basic and acidic residues over residues 227–243 (PRDR…EPRR) and 251–260 (QQFEDRSNEG).

Belongs to the universal ribosomal protein uS3 family. As to quaternary structure, part of the 30S ribosomal subunit. Forms a tight complex with proteins S10 and S14.

Its function is as follows. Binds the lower part of the 30S subunit head. Binds mRNA in the 70S ribosome, positioning it for translation. The polypeptide is Small ribosomal subunit protein uS3 (Nostoc sp. (strain PCC 7120 / SAG 25.82 / UTEX 2576)).